We begin with the raw amino-acid sequence, 405 residues long: tRNA N6-adenosine threonylcarbamoyltransferase, mitochondrial (405 aa).

A mitochondrion-targeting transit peptide spans 1–19 (MAKYISNLSRIAVVRGRVS). Residues H138 and H142 each contribute to the a divalent metal cation site. Substrate contacts are provided by residues 160–164 (LISGG), D193, G213, E217, 320–321 (SN), and T348. Position 349 (D349) interacts with a divalent metal cation.

This sequence belongs to the KAE1 / TsaD family. Monomer. A divalent metal cation serves as cofactor.

It is found in the mitochondrion. The catalysed reaction is L-threonylcarbamoyladenylate + adenosine(37) in tRNA = N(6)-L-threonylcarbamoyladenosine(37) in tRNA + AMP + H(+). In terms of biological role, required for the formation of a threonylcarbamoyl group on adenosine at position 37 (t(6)A37) in mitochondrial tRNAs that read codons beginning with adenine. Probably involved in the transfer of the threonylcarbamoyl moiety of threonylcarbamoyl-AMP (TC-AMP) to the N6 group of A37. Involved in mitochondrial genome maintenance. The chain is tRNA N6-adenosine threonylcarbamoyltransferase, mitochondrial from Xenopus tropicalis (Western clawed frog).